The following is a 433-amino-acid chain: Serine--tRNA ligase (433 aa).

An L-serine-binding site is contributed by 235-237 (TSE). Residue 266-268 (RSE) coordinates ATP. Glutamate 289 contributes to the L-serine binding site. 353 to 356 (EISS) serves as a coordination point for ATP. Serine 388 serves as a coordination point for L-serine.

This sequence belongs to the class-II aminoacyl-tRNA synthetase family. Type-1 seryl-tRNA synthetase subfamily. In terms of assembly, homodimer. The tRNA molecule binds across the dimer.

The protein resides in the cytoplasm. It catalyses the reaction tRNA(Ser) + L-serine + ATP = L-seryl-tRNA(Ser) + AMP + diphosphate + H(+). The catalysed reaction is tRNA(Sec) + L-serine + ATP = L-seryl-tRNA(Sec) + AMP + diphosphate + H(+). It functions in the pathway aminoacyl-tRNA biosynthesis; selenocysteinyl-tRNA(Sec) biosynthesis; L-seryl-tRNA(Sec) from L-serine and tRNA(Sec): step 1/1. In terms of biological role, catalyzes the attachment of serine to tRNA(Ser). Is also able to aminoacylate tRNA(Sec) with serine, to form the misacylated tRNA L-seryl-tRNA(Sec), which will be further converted into selenocysteinyl-tRNA(Sec). This is Serine--tRNA ligase from Burkholderia ambifaria (strain ATCC BAA-244 / DSM 16087 / CCUG 44356 / LMG 19182 / AMMD) (Burkholderia cepacia (strain AMMD)).